A 272-amino-acid chain; its full sequence is 3-methyl-2-oxobutanoate hydroxymethyltransferase (272 aa).

Positions 51 and 90 each coordinate Mg(2+). Residues 51-52 (DS), D90, and K118 each bind 3-methyl-2-oxobutanoate. E120 provides a ligand contact to Mg(2+). E187 acts as the Proton acceptor in catalysis.

Belongs to the PanB family. In terms of assembly, homodecamer; pentamer of dimers. Mg(2+) is required as a cofactor.

The protein resides in the cytoplasm. It carries out the reaction 3-methyl-2-oxobutanoate + (6R)-5,10-methylene-5,6,7,8-tetrahydrofolate + H2O = 2-dehydropantoate + (6S)-5,6,7,8-tetrahydrofolate. It participates in cofactor biosynthesis; (R)-pantothenate biosynthesis; (R)-pantoate from 3-methyl-2-oxobutanoate: step 1/2. Functionally, catalyzes the reversible reaction in which hydroxymethyl group from 5,10-methylenetetrahydrofolate is transferred onto alpha-ketoisovalerate to form ketopantoate. This chain is 3-methyl-2-oxobutanoate hydroxymethyltransferase, found in Xylella fastidiosa (strain M12).